The chain runs to 317 residues: Malate dehydrogenase (317 aa).

Residues 7–13 and Asp-34 each bind NAD(+); that span reads GAAGGIG. Substrate is bound by residues Arg-81 and Arg-87. NAD(+)-binding positions include Asn-94 and 117 to 119; that span reads VTN. Substrate-binding residues include Asn-119 and Arg-153. His-177 functions as the Proton acceptor in the catalytic mechanism. Met-231 is an NAD(+) binding site.

This sequence belongs to the LDH/MDH superfamily. MDH type 1 family. In terms of assembly, homodimer.

It carries out the reaction (S)-malate + NAD(+) = oxaloacetate + NADH + H(+). Its function is as follows. Catalyzes the reversible oxidation of malate to oxaloacetate. The polypeptide is Malate dehydrogenase (Actinobacillus pleuropneumoniae serotype 7 (strain AP76)).